The sequence spans 1122 residues: Angiopoietin-1 receptor (1122 aa).

The N-terminal stretch at Met1–Gly22 is a signal peptide. At Ala23–Leu746 the chain is on the extracellular side. The cysteines at positions 44 and 102 are disulfide-linked. In terms of domain architecture, Ig-like C2-type 1 spans Cys44–Ser123. N-linked (GlcNAc...) asparagine glycosylation is found at Asn140 and Asn158. EGF-like domains follow at residues Arg210 to Glu252, Ala254 to Asn299, and Ala301 to Glu341. Cystine bridges form between Cys211–Cys220, Cys224–Cys233, Cys227–Cys240, Cys242–Cys251, Cys255–Cys264, Cys268–Cys274, Cys280–Cys287, Cys289–Cys298, Cys302–Cys311, Cys315–Cys323, Cys317–Cys329, Cys331–Cys340, and Cys370–Cys424. One can recognise an Ig-like C2-type 2 domain in the interval Pro350–Ser440. N-linked (GlcNAc...) asparagine glycosylation is found at Asn399, Asn438, Asn464, Asn558, Asn595, Asn648, and Asn690. 3 consecutive Fibronectin type-III domains span residues Leu444–Ile539, Pro543–Asp635, and Gln640–His733. The chain crosses the membrane as a helical span at residues Leu747 to Ile767. Topologically, residues Met768–Ala1122 are cytoplasmic. A Protein kinase domain is found at Ile822–Leu1094. Residues Ile828–Val836 and Lys853 each bind ATP. Tyr858 bears the Phosphotyrosine; by autocatalysis mark. The active-site Proton acceptor is Asp962. 3 positions are modified to phosphotyrosine; by autocatalysis: Tyr990, Tyr1100, and Tyr1106.

Belongs to the protein kinase superfamily. Tyr protein kinase family. Tie subfamily. As to quaternary structure, homodimer. Heterodimer with TIE1. Interacts with ANGPT1, ANGPT2 and ANGPT4. At cell-cell contacts in quiescent cells, forms a signaling complex composed of ANGPT1 plus TEK molecules from two adjoining cells. In the absence of endothelial cell-cell contacts, interaction with ANGPT1 mediates contacts with the extracellular matrix. Interacts (tyrosine phosphorylated) with TNIP2. Interacts (tyrosine phosphorylated) with SHC1 (via SH2 domain). Interacts with PTPRB; this promotes endothelial cell-cell adhesion. Interacts with DOK2, GRB2, GRB7, GRB14, PIK3R1 and PTPN11/SHP2. Colocalizes with DOK2 at contacts with the extracellular matrix in migrating cells. In terms of processing, proteolytic processing leads to the shedding of the extracellular domain (soluble TIE-2 alias sTIE-2). Post-translationally, autophosphorylated on tyrosine residues in response to ligand binding. Autophosphorylation occurs in trans, i.e. one subunit of the dimeric receptor phosphorylates tyrosine residues on the other subunit. Autophosphorylation occurs in a sequential manner, where Tyr-990 in the kinase activation loop is phosphorylated first, followed by autophosphorylation at Tyr-1106 and at additional tyrosine residues. ANGPT1-induced phosphorylation is impaired during hypoxia, due to increased expression of ANGPT2. Phosphorylation is important for interaction with GRB14, PIK3R1 and PTPN11. Phosphorylation at Tyr-1100 is important for interaction with GRB2 and GRB7. Phosphorylation at Tyr-1106 is important for interaction with DOK2 and for coupling to downstream signal transduction pathways in endothelial cells. Dephosphorylated by PTPRB. Ubiquitinated. The phosphorylated receptor is ubiquitinated and internalized, leading to its degradation. Specifically expressed in developing vascular endothelial cells. Abundantly expressed in lung and heart, moderately in brain, liver and kidney, and weakly in thymus, spleen and testis.

The protein resides in the cell membrane. It localises to the cell junction. It is found in the focal adhesion. The protein localises to the cytoplasm. Its subcellular location is the cytoskeleton. The protein resides in the secreted. The catalysed reaction is L-tyrosyl-[protein] + ATP = O-phospho-L-tyrosyl-[protein] + ADP + H(+). With respect to regulation, angiopoietin binding leads to receptor dimerization and activation by autophosphorylation at Tyr-990 on the kinase activation loop. Functionally, tyrosine-protein kinase that acts as a cell-surface receptor for ANGPT1, ANGPT2 and ANGPT4 and regulates angiogenesis, endothelial cell survival, proliferation, migration, adhesion and cell spreading, reorganization of the actin cytoskeleton, but also maintenance of vascular quiescence. Has anti-inflammatory effects by preventing the leakage of pro-inflammatory plasma proteins and leukocytes from blood vessels. Required for normal angiogenesis and heart development during embryogenesis. Required for postnatal hematopoiesis. After birth, activates or inhibits angiogenesis, depending on the context. Inhibits angiogenesis and promotes vascular stability in quiescent vessels, where endothelial cells have tight contacts. In quiescent vessels, ANGPT1 oligomers recruit TEK to cell-cell contacts, forming complexes with TEK molecules from adjoining cells, and this leads to preferential activation of phosphatidylinositol 3-kinase and the AKT1 signaling cascades. In migrating endothelial cells that lack cell-cell adhesions, ANGT1 recruits TEK to contacts with the extracellular matrix, leading to the formation of focal adhesion complexes, activation of PTK2/FAK and of the downstream kinases MAPK1/ERK2 and MAPK3/ERK1, and ultimately to the stimulation of sprouting angiogenesis. ANGPT1 signaling triggers receptor dimerization and autophosphorylation at specific tyrosine residues that then serve as binding sites for scaffold proteins and effectors. Signaling is modulated by ANGPT2 that has lower affinity for TEK, can promote TEK autophosphorylation in the absence of ANGPT1, but inhibits ANGPT1-mediated signaling by competing for the same binding site. Signaling is also modulated by formation of heterodimers with TIE1, and by proteolytic processing that gives rise to a soluble TEK extracellular domain. The soluble extracellular domain modulates signaling by functioning as decoy receptor for angiopoietins. TEK phosphorylates DOK2, GRB7, GRB14, PIK3R1, SHC1 and TIE1. The polypeptide is Angiopoietin-1 receptor (Tek) (Mus musculus (Mouse)).